A 218-amino-acid polypeptide reads, in one-letter code: Adenylate kinase (218 aa).

ATP is bound at residue 10-15 (GAGKGT). Residues 30-59 (STGDMLRAAVKAGTPLGIEAKKVMDSGGLV) form an NMP region. Residues threonine 31, arginine 36, 57–59 (GLV), 85–88 (GFPR), and glutamine 92 contribute to the AMP site. Residues 122–159 (GRRSHSASGRTYHVKYNPPKVEGLDDVTGEPLIQREDD) are LID. Residues arginine 123 and 132–133 (TY) each bind ATP. The AMP site is built by arginine 156 and arginine 167. Position 203 (glycine 203) interacts with ATP.

This sequence belongs to the adenylate kinase family. Monomer.

Its subcellular location is the cytoplasm. It carries out the reaction AMP + ATP = 2 ADP. The protein operates within purine metabolism; AMP biosynthesis via salvage pathway; AMP from ADP: step 1/1. Catalyzes the reversible transfer of the terminal phosphate group between ATP and AMP. Plays an important role in cellular energy homeostasis and in adenine nucleotide metabolism. In Polaromonas naphthalenivorans (strain CJ2), this protein is Adenylate kinase.